Reading from the N-terminus, the 211-residue chain is Small ribosomal subunit protein uS3 (211 aa).

Residues 16–85 form the KH type-2 domain; the sequence is IDEYFKGKLV…NPQIEVKPLE (70 aa).

It belongs to the universal ribosomal protein uS3 family. As to quaternary structure, part of the 30S ribosomal subunit.

Functionally, binds the lower part of the 30S subunit head. The sequence is that of Small ribosomal subunit protein uS3 from Methanococcus vannielii (strain ATCC 35089 / DSM 1224 / JCM 13029 / OCM 148 / SB).